The following is a 311-amino-acid chain: ATP synthase subunit gamma, mitochondrial (311 aa).

The N-terminal 33 residues, 1–33 (MLSRIVSNNATRSVMCHQAQVGILYKTNPVRTY), are a transit peptide targeting the mitochondrion.

This sequence belongs to the ATPase gamma chain family. In terms of assembly, F-type ATPases have 2 components, CF(1) - the catalytic core - and CF(0) - the membrane proton channel. CF(1) has five subunits: alpha(3), beta(3), gamma(1), delta(1), epsilon(1). CF(0) has three main subunits: a, b and c.

It localises to the mitochondrion. It is found in the mitochondrion inner membrane. Functionally, mitochondrial membrane ATP synthase (F(1)F(0) ATP synthase or Complex V) produces ATP from ADP in the presence of a proton gradient across the membrane which is generated by electron transport complexes of the respiratory chain. F-type ATPases consist of two structural domains, F(1) - containing the extramembraneous catalytic core, and F(0) - containing the membrane proton channel, linked together by a central stalk and a peripheral stalk. During catalysis, ATP synthesis in the catalytic domain of F(1) is coupled via a rotary mechanism of the central stalk subunits to proton translocation. Part of the complex F(1) domain and the central stalk which is part of the complex rotary element. The gamma subunit protrudes into the catalytic domain formed of alpha(3)beta(3). Rotation of the central stalk against the surrounding alpha(3)beta(3) subunits leads to hydrolysis of ATP in three separate catalytic sites on the beta subunits. The polypeptide is ATP synthase subunit gamma, mitochondrial (ATP3) (Saccharomyces cerevisiae (strain ATCC 204508 / S288c) (Baker's yeast)).